We begin with the raw amino-acid sequence, 739 residues long: Phosphoribosylformylglycinamidine synthase subunit PurL (739 aa).

Histidine 55 is a catalytic residue. 2 residues coordinate ATP: tyrosine 58 and lysine 97. Glutamate 99 serves as a coordination point for Mg(2+). Residues serine 100–histidine 103 and arginine 122 contribute to the substrate site. Histidine 101 serves as the catalytic Proton acceptor. Residue aspartate 123 participates in Mg(2+) binding. Glutamine 246 contacts substrate. Aspartate 276 provides a ligand contact to Mg(2+). Position 320–322 (glutamate 320–glutamine 322) interacts with substrate. ATP is bound by residues aspartate 502 and glycine 539. Asparagine 540 is a binding site for Mg(2+). Serine 542 serves as a coordination point for substrate.

This sequence belongs to the FGAMS family. In terms of assembly, monomer. Part of the FGAM synthase complex composed of 1 PurL, 1 PurQ and 2 PurS subunits.

It is found in the cytoplasm. It carries out the reaction N(2)-formyl-N(1)-(5-phospho-beta-D-ribosyl)glycinamide + L-glutamine + ATP + H2O = 2-formamido-N(1)-(5-O-phospho-beta-D-ribosyl)acetamidine + L-glutamate + ADP + phosphate + H(+). The protein operates within purine metabolism; IMP biosynthesis via de novo pathway; 5-amino-1-(5-phospho-D-ribosyl)imidazole from N(2)-formyl-N(1)-(5-phospho-D-ribosyl)glycinamide: step 1/2. In terms of biological role, part of the phosphoribosylformylglycinamidine synthase complex involved in the purines biosynthetic pathway. Catalyzes the ATP-dependent conversion of formylglycinamide ribonucleotide (FGAR) and glutamine to yield formylglycinamidine ribonucleotide (FGAM) and glutamate. The FGAM synthase complex is composed of three subunits. PurQ produces an ammonia molecule by converting glutamine to glutamate. PurL transfers the ammonia molecule to FGAR to form FGAM in an ATP-dependent manner. PurS interacts with PurQ and PurL and is thought to assist in the transfer of the ammonia molecule from PurQ to PurL. This Lactiplantibacillus plantarum (strain ATCC BAA-793 / NCIMB 8826 / WCFS1) (Lactobacillus plantarum) protein is Phosphoribosylformylglycinamidine synthase subunit PurL.